Here is a 152-residue protein sequence, read N- to C-terminus: D-aminoacyl-tRNA deacylase (152 aa).

A Gly-cisPro motif, important for rejection of L-amino acids motif is present at residues 142 to 143 (GP).

The protein belongs to the DTD family. Homodimer.

The protein localises to the cytoplasm. It carries out the reaction glycyl-tRNA(Ala) + H2O = tRNA(Ala) + glycine + H(+). The enzyme catalyses a D-aminoacyl-tRNA + H2O = a tRNA + a D-alpha-amino acid + H(+). In terms of biological role, an aminoacyl-tRNA editing enzyme that deacylates mischarged D-aminoacyl-tRNAs. Also deacylates mischarged glycyl-tRNA(Ala), protecting cells against glycine mischarging by AlaRS. Acts via tRNA-based rather than protein-based catalysis; rejects L-amino acids rather than detecting D-amino acids in the active site. By recycling D-aminoacyl-tRNA to D-amino acids and free tRNA molecules, this enzyme counteracts the toxicity associated with the formation of D-aminoacyl-tRNA entities in vivo and helps enforce protein L-homochirality. In Paraburkholderia phymatum (strain DSM 17167 / CIP 108236 / LMG 21445 / STM815) (Burkholderia phymatum), this protein is D-aminoacyl-tRNA deacylase.